The primary structure comprises 1088 residues: Calcium-transporting ATPase 5, plasma membrane-type (1088 aa).

Over residues 1–11 (MESASSSLATS) the composition is skewed to low complexity. Residues 1-32 (MESASSSLATSGRRRSSSGGGGGSWGSIGSAA) are disordered. Residues 1–198 (MESASSSLAT…FLWDACKDLT (198 aa)) are Cytoplasmic-facing. Residues 199–219 (LIILMVAAAVSLALGITTEGI) form a helical membrane-spanning segment. The Extracellular segment spans residues 220 to 221 (KE). A helical membrane pass occupies residues 222 to 242 (GWYDGASIAFAVLLVVVVTAT). Residues 243–338 (SDYKQSLQFQ…MSGCKVADGY (96 aa)) lie on the Cytoplasmic side of the membrane. A helical transmembrane segment spans residues 339 to 359 (GTMLVTAVGINTEWGLLMASI). The Extracellular portion of the chain corresponds to 360 to 375 (SEDSGEETPLQVRLNG). Residues 376–396 (VATFIGMVGLSVALAVLVVLL) form a helical membrane-spanning segment. Over 397-425 (ARYFTGHTYNPDGSVQYVKGKMGVGQTIR) the chain is Cytoplasmic. The helical transmembrane segment at 426–446 (GIVGIFTVAVTIVVVAVPEGL) threads the bilayer. Topologically, residues 447–851 (PLAVTLTLAF…GRSVYANIQK (405 aa)) are extracellular. Asp486 acts as the 4-aspartylphosphate intermediate in catalysis. N-linked (GlcNAc...) asparagine glycosylation is found at Asn532, Asn569, and Asn737. Mg(2+) is bound by residues Asp794 and Asp798. A helical transmembrane segment spans residues 852–872 (FIQFQLTVNVAALIINVVAAV). At 873–880 (SSGNVPLN) the chain is on the cytoplasmic side. The chain crosses the membrane as a helical span at residues 881 to 901 (AVQLLWVNLIMDTLGALALAT). At 902–919 (EPPTDHLMQRPPVGRREP) the chain is on the extracellular side. The helical transmembrane segment at 920 to 940 (LITNVMWRNLIIMALFQVIVL) threads the bilayer. Residues 941–1000 (LTLNFRGTSLLQLKNDNQAHADKVKNTFIFNTFVLCQVFNEFNARKPDELNIFKGITGNH) are Cytoplasmic-facing. A helical membrane pass occupies residues 1001–1021 (LFMAIVAITVVLQALIVEFLG). The Extracellular segment spans residues 1022 to 1030 (KFTSTTRLT). Residues 1031–1051 (WQLWLVSIGLAFFSWPLAFVG) form a helical membrane-spanning segment. At 1052–1088 (KLIPVPERPLGDFFACCCPGSKQAADAKGDDADHSDV) the chain is on the cytoplasmic side.

The protein belongs to the cation transport ATPase (P-type) (TC 3.A.3) family. Type IIB subfamily. As to quaternary structure, interacts with NOH1.

The protein localises to the cell membrane. It catalyses the reaction Ca(2+)(in) + ATP + H2O = Ca(2+)(out) + ADP + phosphate + H(+). Activated by calmodulin. This magnesium-dependent enzyme catalyzes the hydrolysis of ATP coupled with the translocation of calcium from the cytosol out of the cell, into the endoplasmic reticulum, or into organelles. Involved in salt and drought stress tolerance. Involved in cold stress tolerance. The chain is Calcium-transporting ATPase 5, plasma membrane-type from Oryza sativa subsp. japonica (Rice).